We begin with the raw amino-acid sequence, 158 residues long: Secreted RxLR effector protein 2 (158 aa).

The signal sequence occupies residues 1–21 (MRLLLWVLLVTLVTFLSSGDA). A RxLR-dEER motif is present at residues 54-75 (RFLRGDRSNIVNLKDGDENEER).

The protein belongs to the RxLR effector family.

It localises to the secreted. The protein localises to the host cell. Secreted effector that completely suppresses elicitor-induced cell death in host and enhances virulence of P.parasitica. The chain is Secreted RxLR effector protein 2 from Phytophthora nicotianae (Potato buckeye rot agent).